The chain runs to 320 residues: Transaldolase (320 aa).

The Schiff-base intermediate with substrate role is filled by Lys135.

Belongs to the transaldolase family. Type 1 subfamily. Homodimer.

It localises to the cytoplasm. It catalyses the reaction D-sedoheptulose 7-phosphate + D-glyceraldehyde 3-phosphate = D-erythrose 4-phosphate + beta-D-fructose 6-phosphate. It participates in carbohydrate degradation; pentose phosphate pathway; D-glyceraldehyde 3-phosphate and beta-D-fructose 6-phosphate from D-ribose 5-phosphate and D-xylulose 5-phosphate (non-oxidative stage): step 2/3. Functionally, transaldolase is important for the balance of metabolites in the pentose-phosphate pathway. This is Transaldolase from Colwellia psychrerythraea (strain 34H / ATCC BAA-681) (Vibrio psychroerythus).